Consider the following 353-residue polypeptide: Photosystem II D2 protein (353 aa).

An N-acetylthreonine modification is found at Thr-2. Thr-2 is subject to Phosphothreonine. The helical transmembrane segment at 41–61 (CAYFALGGWFTGTTFVTSWYT) threads the bilayer. His-118 is a chlorophyll a binding site. Residues 125–141 (GFMLRQFELARSVQLRP) form a helical membrane-spanning segment. 2 residues coordinate pheophytin a: Gln-130 and Asn-143. The helical transmembrane segment at 153 to 166 (VFVSVFLIYPLGQS) threads the bilayer. His-198 serves as a coordination point for chlorophyll a. Residues 208–228 (AALLCAIHGATVENTLFEDGD) form a helical membrane-spanning segment. A plastoquinone-binding residues include His-215 and Phe-262. Fe cation is bound at residue His-215. Residue His-269 participates in Fe cation binding. Residues 279 to 295 (GLWMSALGVVGLALNLR) form a helical membrane-spanning segment.

This sequence belongs to the reaction center PufL/M/PsbA/D family. In terms of assembly, PSII is composed of 1 copy each of membrane proteins PsbA, PsbB, PsbC, PsbD, PsbE, PsbF, PsbH, PsbI, PsbJ, PsbK, PsbL, PsbM, PsbT, PsbX, PsbY, PsbZ, Psb30/Ycf12, at least 3 peripheral proteins of the oxygen-evolving complex and a large number of cofactors. It forms dimeric complexes. The D1/D2 heterodimer binds P680, chlorophylls that are the primary electron donor of PSII, and subsequent electron acceptors. It shares a non-heme iron and each subunit binds pheophytin, quinone, additional chlorophylls, carotenoids and lipids. There is also a Cl(-1) ion associated with D1 and D2, which is required for oxygen evolution. The PSII complex binds additional chlorophylls, carotenoids and specific lipids. serves as cofactor.

It is found in the plastid. The protein localises to the chloroplast thylakoid membrane. The catalysed reaction is 2 a plastoquinone + 4 hnu + 2 H2O = 2 a plastoquinol + O2. Its function is as follows. Photosystem II (PSII) is a light-driven water:plastoquinone oxidoreductase that uses light energy to abstract electrons from H(2)O, generating O(2) and a proton gradient subsequently used for ATP formation. It consists of a core antenna complex that captures photons, and an electron transfer chain that converts photonic excitation into a charge separation. The D1/D2 (PsbA/PsbD) reaction center heterodimer binds P680, the primary electron donor of PSII as well as several subsequent electron acceptors. D2 is needed for assembly of a stable PSII complex. This chain is Photosystem II D2 protein, found in Phaseolus vulgaris (Kidney bean).